A 403-amino-acid chain; its full sequence is Cytochrome P450 monooxygenase ustC (403 aa).

Positions 1 to 18 (MSPFIFAVTLTFAILALG) are cleaved as a signal peptide. N-linked (GlcNAc...) asparagine glycans are attached at residues Asn-52 and Asn-92. Position 318 (Cys-318) interacts with heme.

It belongs to the cytochrome P450 family. The cofactor is heme.

It participates in mycotoxin biosynthesis. Functionally, cytochrome P450 monooxygenase; part of the gene cluster that mediates the biosynthesis of the secondary metabolite ustiloxin B, an antimitotic tetrapeptide. First, ustA is processed by the subtilisin-like endoprotease Kex2 that is outside the ustiloxin B gene cluster, at the C-terminal side of Arg-Lys, after transfer to Golgi apparatus through the endoplasmic reticulum (ER). Cleavage by KEX2 generates 16 peptides YAIG-I to YAIG-XVI. To process the precursor peptide further, at least two peptidases are necessary to cleave the N-terminal and C-terminal sides of the Tyr-Ala-Ile-Gly core peptide which serves as backbone for the synthesis of ustiloxin B, through cyclization and modification of the tyrosine with a non-protein coding amino acid, norvaline. One of the two peptidases must be the serine peptidase ustP; and the other pepdidase is probably ustH. Macrocyclization of the core peptide derived from ustA requires the tyrosinase ustQ, as well as the homologous oxidases ustYa and ustYb, and leads to the production of the first cyclization product N-desmethylustiloxin F. For the formation of N-desmethylustiloxin F, three oxidation steps are required, hydroxylation at the benzylic position, hydroxylation at either the aromatic ring of Tyr or beta-position of Ile, and oxidative cyclization. UstQ may catalyze the oxidation of a phenol moiety, whereas the ustYa and ustYb are most likely responsible for the remaining two-step oxidations. N-desmethylustiloxin F is then methylated by ustM to yield ustiloxin F which in turn substrate of the cytochrome P450 monooxygenase ustC which catalyzes the formation of S-deoxyustiloxin H. The flavoprotein monooxygenases ustF1 and ustF2 then participate in the modification of the side chain of S-deoxyustiloxin H, leading to the synthesis of an oxime intermediate, via ustiloxin H. Finally, carboxylative dehydration performed by the cysteine desulfurase-like protein ustD yields ustiloxin B. In Aspergillus flavus (strain ATCC 200026 / FGSC A1120 / IAM 13836 / NRRL 3357 / JCM 12722 / SRRC 167), this protein is Cytochrome P450 monooxygenase ustC.